A 417-amino-acid polypeptide reads, in one-letter code: UDP-N-acetylglucosamine 1-carboxyvinyltransferase (417 aa).

Residue 22 to 23 (KN) participates in phosphoenolpyruvate binding. Arg91 contacts UDP-N-acetyl-alpha-D-glucosamine. Cys115 (proton donor) is an active-site residue. 2-(S-cysteinyl)pyruvic acid O-phosphothioketal is present on Cys115. Residues 120–124 (RPVDL), Asp304, and Ile326 each bind UDP-N-acetyl-alpha-D-glucosamine.

This sequence belongs to the EPSP synthase family. MurA subfamily.

It localises to the cytoplasm. The enzyme catalyses phosphoenolpyruvate + UDP-N-acetyl-alpha-D-glucosamine = UDP-N-acetyl-3-O-(1-carboxyvinyl)-alpha-D-glucosamine + phosphate. It participates in cell wall biogenesis; peptidoglycan biosynthesis. Cell wall formation. Adds enolpyruvyl to UDP-N-acetylglucosamine. The chain is UDP-N-acetylglucosamine 1-carboxyvinyltransferase from Nitratidesulfovibrio vulgaris (strain ATCC 29579 / DSM 644 / CCUG 34227 / NCIMB 8303 / VKM B-1760 / Hildenborough) (Desulfovibrio vulgaris).